An 846-amino-acid polypeptide reads, in one-letter code: Pseudolaratriene synthase, chloroplastic (846 aa).

The N-terminal 58 residues, 1–58 (MSRFTSATHGLNLSIKMPISVSQVPSIRSNTSKYELQKLRSTGRSVLQTRRQLAIINM), are a transit peptide targeting the chloroplast. Asp595, Asp599, and Asp747 together coordinate Mg(2+). The DDXXD motif motif lies at 595-599 (DDIYD).

It belongs to the terpene synthase family. Mg(2+) is required as a cofactor. Expressed in young and mature roots. Expressed at low levels in barks.

The protein resides in the plastid. The protein localises to the chloroplast. It carries out the reaction (2E,6E,10E)-geranylgeranyl diphosphate = pseudolaratriene + diphosphate. Its pathway is terpene metabolism. Functionally, converts geranylgeranyl diphosphate to an new 5,7-fused bicyclic diterpene, named pseudolaratriene. Catalyzes the first committed step in pseudolaric acid B (PAB) biosynthesis. PAB exhibits antiproliferative activity by inhibiting microtubule polymerization, and has demonstrated antitumor properties against several cancer types. The sequence is that of Pseudolaratriene synthase, chloroplastic from Pseudolarix amabilis (Golden larch).